The primary structure comprises 1217 residues: DNA-directed RNA polymerase subunit beta' (1217 aa).

The Zn(2+) site is built by C60, C62, C75, and C78. Residues D449, D451, and D453 each coordinate Mg(2+). C818, C892, C899, and C902 together coordinate Zn(2+).

It belongs to the RNA polymerase beta' chain family. As to quaternary structure, the RNAP catalytic core consists of 2 alpha, 1 beta, 1 beta' and 1 omega subunit. When a sigma factor is associated with the core the holoenzyme is formed, which can initiate transcription. Mg(2+) serves as cofactor. It depends on Zn(2+) as a cofactor.

It catalyses the reaction RNA(n) + a ribonucleoside 5'-triphosphate = RNA(n+1) + diphosphate. Its function is as follows. DNA-dependent RNA polymerase catalyzes the transcription of DNA into RNA using the four ribonucleoside triphosphates as substrates. This is DNA-directed RNA polymerase subunit beta' from Enterococcus faecalis (strain ATCC 700802 / V583).